The sequence spans 301 residues: Protoheme IX farnesyltransferase (301 aa).

The next 9 membrane-spanning stretches (helical) occupy residues 34-54, 55-75, 102-121, 125-144, 152-172, 181-201, 222-242, 247-267, and 280-300; these read LVVF…HPLI, GLVS…FNMW, AWEC…AIAV, SALL…TMLL, IVIG…SVSG, LFAI…LLTL, SHIL…GLFV, LYEI…IAVF, and GLFK…IACV.

The protein belongs to the UbiA prenyltransferase family. Protoheme IX farnesyltransferase subfamily.

It localises to the cell inner membrane. The catalysed reaction is heme b + (2E,6E)-farnesyl diphosphate + H2O = Fe(II)-heme o + diphosphate. It functions in the pathway porphyrin-containing compound metabolism; heme O biosynthesis; heme O from protoheme: step 1/1. Its function is as follows. Converts heme B (protoheme IX) to heme O by substitution of the vinyl group on carbon 2 of heme B porphyrin ring with a hydroxyethyl farnesyl side group. In Anaplasma marginale (strain Florida), this protein is Protoheme IX farnesyltransferase.